The chain runs to 215 residues: Pyridoxine/pyridoxamine 5'-phosphate oxidase (215 aa).

Residues 9 to 12 (RRDY) and Lys69 contribute to the substrate site. FMN-binding positions include 64 to 69 (RVLLLK), 79 to 80 (FT), Lys86, and Gln108. 3 residues coordinate substrate: Tyr126, Arg130, and Ser134. FMN contacts are provided by residues 143–144 (QS) and Trp188. 194 to 196 (RLH) is a binding site for substrate. Residue Arg198 participates in FMN binding.

It belongs to the pyridoxamine 5'-phosphate oxidase family. In terms of assembly, homodimer. FMN is required as a cofactor.

The enzyme catalyses pyridoxamine 5'-phosphate + O2 + H2O = pyridoxal 5'-phosphate + H2O2 + NH4(+). It catalyses the reaction pyridoxine 5'-phosphate + O2 = pyridoxal 5'-phosphate + H2O2. Its pathway is cofactor metabolism; pyridoxal 5'-phosphate salvage; pyridoxal 5'-phosphate from pyridoxamine 5'-phosphate: step 1/1. The protein operates within cofactor metabolism; pyridoxal 5'-phosphate salvage; pyridoxal 5'-phosphate from pyridoxine 5'-phosphate: step 1/1. In terms of biological role, catalyzes the oxidation of either pyridoxine 5'-phosphate (PNP) or pyridoxamine 5'-phosphate (PMP) into pyridoxal 5'-phosphate (PLP). The polypeptide is Pyridoxine/pyridoxamine 5'-phosphate oxidase (Pseudomonas savastanoi pv. phaseolicola (strain 1448A / Race 6) (Pseudomonas syringae pv. phaseolicola (strain 1448A / Race 6))).